The following is a 580-amino-acid chain: Mitogen-activated protein kinase 12 (580 aa).

Positions 18 to 38 are disordered; the sequence is RTASGSNQSSNAGEEAASSDL. The segment covering 20-29 has biased composition (polar residues); sequence ASGSNQSSNA. Residues 87-378 form the Protein kinase domain; it reads YQIQEVIGKG…AEEALADPYF (292 aa). ATP-binding positions include 93–101 and K116; that span reads IGKGSYGVV. Residue D213 is the Proton acceptor of the active site. Residue T249 is modified to Phosphothreonine. Residues 249-251 carry the TXY motif; it reads TDY. At Y251 the chain carries Phosphotyrosine. The segment at 325–506 is required for kinase activity and nuclear localization; sequence ARRYLSTMRK…SADSVARTTV (182 aa). Residues 458–580 are disordered; that stretch reads YSKGERGSPL…LSEQVSRMHS (123 aa). A compositionally biased stretch (polar residues) spans 502-543; sequence ARTTVSPPMSQDAQQHGSAGQNGVTSTDLSSRSYLKSASISA. The segment covering 554–566 has biased composition (acidic residues); sequence EPEDDYISEEMEG.

This sequence belongs to the protein kinase superfamily. CMGC Ser/Thr protein kinase family. MAP kinase subfamily. As to quaternary structure, interacts with EREBP1. In terms of processing, dually phosphorylated on Thr-249 and Tyr-251, which activates the enzyme. Phosphorylated on tyrosine residue.

Its subcellular location is the cytoplasm. The protein resides in the nucleus. It carries out the reaction L-seryl-[protein] + ATP = O-phospho-L-seryl-[protein] + ADP + H(+). It catalyses the reaction L-threonyl-[protein] + ATP = O-phospho-L-threonyl-[protein] + ADP + H(+). With respect to regulation, activated by threonine and tyrosine phosphorylation. Activated in response to hydrogen peroxide, salicylic acid, jasmonic acid, ethylene, fungal elicitor and infection with rice blast fungus (M.grisea). Its function is as follows. May be involved in defense signaling pathway. Phosphorylates EREBP1 transcriptional activator in vitro. Enhances DNA-binding activity of EREBP1 to the GCC box element of pathogenesis-related (PR) gene promoters. This is Mitogen-activated protein kinase 12 (MPK12) from Oryza sativa subsp. japonica (Rice).